A 284-amino-acid chain; its full sequence is GPN-loop GTPase 3 (284 aa).

13 to 18 is a binding site for GTP; that stretch reads GSGKST. Residues 72 to 74 carry the Gly-Pro-Asn (GPN)-loop; involved in dimer interface motif; it reads GPN. 174–177 contributes to the GTP binding site; sequence TKMD.

It belongs to the GPN-loop GTPase family. In terms of assembly, heterodimer with GPN1. Binds to RNA polymerase II (RNAPII). Interacts directly with subunits RPB4 and RPB7 and the CTD of RPB1.

Functionally, small GTPase required for proper localization of RNA polymerase II (RNAPII). May act at an RNAP assembly step prior to nuclear import. The chain is GPN-loop GTPase 3 from Homo sapiens (Human).